The following is a 498-amino-acid chain: Ribosomal RNA small subunit methyltransferase G 2 (498 aa).

A methyltransferase G region spans residues 1-230; sequence MRNGTIRYPG…FQRLGPPTRI (230 aa). S-adenosyl-L-methionine is bound by residues glycine 89, methionine 94, and arginine 154. A methyltransferase TrmH family region spans residues 231–498; that stretch reads RKETAMKRHG…SQTKHSPAPA (268 aa).

The protein in the N-terminal section; belongs to the methyltransferase superfamily. RNA methyltransferase RsmG family. It in the C-terminal section; belongs to the class IV-like SAM-binding methyltransferase superfamily. RNA methyltransferase TrmH family.

It localises to the cytoplasm. The catalysed reaction is guanosine(527) in 16S rRNA + S-adenosyl-L-methionine = N(7)-methylguanosine(527) in 16S rRNA + S-adenosyl-L-homocysteine. Functionally, specifically methylates the N7 position of guanine in position 527 of 16S rRNA. In Syntrophobacter fumaroxidans (strain DSM 10017 / MPOB), this protein is Ribosomal RNA small subunit methyltransferase G 2 (rsmG2).